Reading from the N-terminus, the 29-residue chain is Thrombin-like enzyme collinein-2 (29 aa).

As to quaternary structure, monomer. In terms of tissue distribution, expressed by the venom gland.

Its subcellular location is the secreted. Its function is as follows. Thrombin-like snake venom serine protease. The chain is Thrombin-like enzyme collinein-2 from Crotalus durissus collilineatus (Brazilian rattlesnake).